The following is a 307-amino-acid chain: Auxin-induced protein PCNT115 (307 aa).

Catalysis depends on Tyr-64, which acts as the Proton donor. His-136 contributes to the substrate binding site. An NADP(+)-binding site is contributed by 215 to 225 (SPLGRGFLSSG).

Belongs to the aldo/keto reductase family. Aldo/keto reductase 2 subfamily.

The sequence is that of Auxin-induced protein PCNT115 from Nicotiana tabacum (Common tobacco).